We begin with the raw amino-acid sequence, 180 residues long: Large ribosomal subunit protein uL5 (180 aa).

The protein belongs to the universal ribosomal protein uL5 family. In terms of assembly, part of the 50S ribosomal subunit; part of the 5S rRNA/L5/L18/L25 subcomplex. Contacts the 5S rRNA and the P site tRNA. Forms a bridge to the 30S subunit in the 70S ribosome.

Its function is as follows. This is one of the proteins that bind and probably mediate the attachment of the 5S RNA into the large ribosomal subunit, where it forms part of the central protuberance. In the 70S ribosome it contacts protein S13 of the 30S subunit (bridge B1b), connecting the 2 subunits; this bridge is implicated in subunit movement. Contacts the P site tRNA; the 5S rRNA and some of its associated proteins might help stabilize positioning of ribosome-bound tRNAs. The chain is Large ribosomal subunit protein uL5 from Chlamydia pneumoniae (Chlamydophila pneumoniae).